A 249-amino-acid polypeptide reads, in one-letter code: Vesicle-associated membrane protein-associated protein A (249 aa).

Ala-2 bears the N-acetylalanine mark. Residues 2 to 227 are Cytoplasmic-facing; sequence ASASGAMAKH…ASFRDNVTSP (226 aa). Positions 14 to 131 constitute an MSP domain; the sequence is ILVLDPPTDL…MDSKLRCVFE (118 aa). The phosphorylated FFAT motif binding stretch occupies residues 50–53; the sequence is KVKT. Lys-125 is subject to N6-acetyllysine. Basic and acidic residues predominate over residues 135–144; the sequence is ENDKLNDMEP. Positions 135 to 167 are disordered; sequence ENDKLNDMEPSKAVPLNASKQDGPMPKPHSVSL. Ser-166 bears the Phosphoserine mark. Residues 169–205 adopt a coiled-coil conformation; the sequence is DTETRKLMEECKRLQGEMMKLSEENRHLRDEGLRLRK. Phosphothreonine is present on Thr-170. Phosphoserine occurs at positions 214, 216, and 219. Residues 228-248 form a helical; Anchor for type IV membrane protein membrane-spanning segment; that stretch reads LPSLLVVIAAIFIGFFLGKFI.

It belongs to the VAMP-associated protein (VAP) (TC 9.B.17) family. In terms of assembly, homodimer; disulfide-linked. Heterodimer with VAPB. Interacts with VAMP1, VAMP2, STX1A, BET1, SEC22C and with the C-terminal domain of OCLN. Interacts (via MSP domain) with OSBPL1A (via FFAT motif). Interacts (via MSP domain) with ZFYVE27; may retain ZFYVE27 in the endoplasmic reticulum and regulate its function in cell projections formation. Interacts with OSBP. Interacts (via C-terminus) with RSAD2/viperin (via C-terminus). Interacts with IFITM3. Interacts with OSBPL3 (phosphorylated form). Interacts with KIF5A in a ZFYVE27-dependent manner. Interacts (via MSP domain) with STARD3 (via phosphorylated FFAT motif); this interaction recruits VAPA to the endosome. Interacts with STARD3NL (via FFAT motif). Interacts with CERT1. Interacts with PLEKHA3 and SACM1L to form a ternary complex. Interacts with VPS13A (via FFAT motif). Interacts with RB1CC1 (via phosphorylated FFAT motif), MIGA2 (via phosphorylated FFAT motif), RMDN3 (via phosphorylated FFAT motif), KCNB1 (via phosphorylated FFAT motif) and KCNB2 (via phosphorylated FFAT motif). Interacts (via MSP domain) with WDR44 (via FFAT-like motif); the interactions connect the endoplasmic reticulum (ER) with the endosomal tubule. (Microbial infection) Interacts with HCV protein NS5A and NS5B. Ubiquitous.

Its subcellular location is the endoplasmic reticulum membrane. The protein resides in the cell membrane. It localises to the cell junction. The protein localises to the tight junction. It is found in the nucleus membrane. Its function is as follows. Endoplasmic reticulum (ER)-anchored protein that mediates the formation of contact sites between the ER and endosomes via interaction with FFAT motif-containing proteins such as STARD3 or WDR44. STARD3-VAPA interaction enables cholesterol transfer from the ER to endosomes. Via interaction with WDR44 participates in neosynthesized protein export. In addition, recruited to the plasma membrane through OSBPL3 binding. The OSBPL3-VAPA complex stimulates RRAS signaling which in turn attenuates integrin beta-1 (ITGB1) activation at the cell surface. With OSBPL3, may regulate ER morphology. May play a role in vesicle trafficking. This is Vesicle-associated membrane protein-associated protein A from Homo sapiens (Human).